Reading from the N-terminus, the 251-residue chain is Hydroxyacylglutathione hydrolase (251 aa).

Zn(2+) contacts are provided by histidine 55, histidine 57, aspartate 59, histidine 60, histidine 112, aspartate 131, and histidine 169.

This sequence belongs to the metallo-beta-lactamase superfamily. Glyoxalase II family. As to quaternary structure, monomer. Requires Zn(2+) as cofactor.

The enzyme catalyses an S-(2-hydroxyacyl)glutathione + H2O = a 2-hydroxy carboxylate + glutathione + H(+). It functions in the pathway secondary metabolite metabolism; methylglyoxal degradation; (R)-lactate from methylglyoxal: step 2/2. Its function is as follows. Thiolesterase that catalyzes the hydrolysis of S-D-lactoyl-glutathione to form glutathione and D-lactic acid. The chain is Hydroxyacylglutathione hydrolase from Erythrobacter litoralis (strain HTCC2594).